Here is a 105-residue protein sequence, read N- to C-terminus: Guanyl-specific ribonuclease Ms (105 aa).

Disulfide bonds link C3–C11 and C7–C102. Residue H39 is part of the active site. E57 serves as the catalytic Proton acceptor. H91 serves as the catalytic Proton donor.

The protein belongs to the ribonuclease N1/T1 family.

It carries out the reaction [RNA] containing guanosine + H2O = an [RNA fragment]-3'-guanosine-3'-phosphate + a 5'-hydroxy-ribonucleotide-3'-[RNA fragment].. The polypeptide is Guanyl-specific ribonuclease Ms (Aspergillus phoenicis (Aspergillus saitoi)).